Reading from the N-terminus, the 189-residue chain is UPF0398 protein lhv_1265 (189 aa).

It belongs to the UPF0398 family.

The protein is UPF0398 protein lhv_1265 of Lactobacillus helveticus (strain DPC 4571).